The chain runs to 91 residues: uncharacterized protein (91 aa).

3 consecutive transmembrane segments (helical) span residues 9–29 (LIHA…YTAG), 30–50 (LGIF…VIFG), and 67–87 (WLGC…VLKF).

The protein resides in the cell membrane. This is an uncharacterized protein from Methanocaldococcus jannaschii (strain ATCC 43067 / DSM 2661 / JAL-1 / JCM 10045 / NBRC 100440) (Methanococcus jannaschii).